The primary structure comprises 176 residues: Mitochondrial inner membrane protein Mpv17 (176 aa).

The next 4 membrane-spanning stretches (helical) occupy residues 18–38 (VQVLTAGSLMGLGDIISQQLV), 57–77 (LGCGFVGPVVGGWYRVLDHLI), 94–114 (GGFAPCFLGCFLPLVGVLNGM), and 131–151 (LITNYYLWPAVQLANFYLVPL).

It belongs to the peroxisomal membrane protein PXMP2/4 family.

Its subcellular location is the mitochondrion inner membrane. Functionally, non-selective channel that modulates the membrane potential under normal conditions and oxidative stress, and is involved in mitochondrial homeostasis. Involved in mitochondrial deoxynucleoside triphosphates (dNTP) pool homeostasis and mitochondrial DNA (mtDNA) maintenance. May be involved in the regulation of reactive oxygen species metabolism and the control of oxidative phosphorylation. The chain is Mitochondrial inner membrane protein Mpv17 from Rattus norvegicus (Rat).